The following is a 778-amino-acid chain: Actin-binding LIM protein 1 (778 aa).

LIM zinc-binding domains follow at residues 97–156 (IHCH…MYGT), 156–216 (TRCH…MSSS), 224–283 (SNCA…LFGV), and 283–343 (VKCE…TKTE). Position 216 is a phosphoserine (Ser216). Residues 339 to 370 (STKTEEKLRPTRTSSESIYSRPGSSIPGSPGH) are disordered. The span at 360 to 369 (PGSSIPGSPG) shows a compositional bias: low complexity. Ser367 is modified (phosphoserine). Phosphotyrosine is present on residues Tyr373 and Tyr396. 2 disordered regions span residues 414 to 510 (YDDK…QAPK) and 552 to 597 (AAQA…EELL). Phosphoserine occurs at positions 422, 426, and 431. Positions 423–434 (LGESPRTLSPTP) are enriched in polar residues. Thr433 is modified (phosphothreonine). Ser435 is modified (phosphoserine). Tyr439 carries the phosphotyrosine modification. Residues 449–474 (RSTSQGSINSPVYSRHSYTPTTSRSP) show a composition bias toward polar residues. Ser452, Ser455, Ser458, Ser498, and Ser587 each carry phosphoserine. The stretch at 590-614 (EEDDEELLRRRQLQEEQLMKLNSGL) forms a coiled coil. A Glycyl lysine isopeptide (Lys-Gly) (interchain with G-Cter in SUMO2) cross-link involves residue Lys620. A phosphoserine mark is found at Ser640, Ser655, Ser677, and Ser706. The region spanning 710-778 (MLEPKIFPYE…NDMKKKAKLF (69 aa)) is the HP domain.

Binds F-actin. Interacts with ABRA. Detected in liver, heart, skeletal muscle, brain and retina, where it is concentrated in the inner segment and in the outer plexiform layers.

Its subcellular location is the cytoplasm. The protein localises to the cytoskeleton. In terms of biological role, may act as scaffold protein. May play a role in the development of the retina. Has been suggested to play a role in axon guidance. In Homo sapiens (Human), this protein is Actin-binding LIM protein 1 (ABLIM1).